The chain runs to 691 residues: CREB-regulated transcription coactivator 2 (691 aa).

The segment covering 1–20 (MATSGANGPGSATASASNPR) has biased composition (polar residues). Residues 1 to 30 (MATSGANGPGSATASASNPRKFSEKIALQK) form a disordered region. Alanine 2 is subject to N-acetylalanine. At arginine 51 the chain carries Asymmetric dimethylarginine; by PRMT6. Phosphoserine is present on residues serine 70, serine 86, and serine 90. Arginine 99, arginine 120, and arginine 123 each carry asymmetric dimethylarginine; by PRMT6. A Phosphoserine modification is found at serine 136. Asymmetric dimethylarginine; by PRMT6 occurs at positions 161 and 168. Threonine 169 is modified (phosphothreonine). Serine 171 carries the post-translational modification Phosphoserine; by AMPK, MARK2, SIK1 and SIK2. Positions 174–186 (ALHTSVMNPNPQD) are enriched in polar residues. The segment at 174-195 (ALHTSVMNPNPQDTYPGPTPPS) is disordered. Phosphothreonine is present on threonine 192. A Glycyl lysine isopeptide (Lys-Gly) (interchain with G-Cter in SUMO2) cross-link involves residue lysine 234. A Nuclear export signal motif is present at residues 271-287 (TGGSLPDLTNLHFPPPL). Serine 274 bears the Phosphoserine; by MARK2 mark. Disordered stretches follow at residues 280–306 (NLHFPPPLPTPLDPEETVYPSLSGGNS) and 335–491 (HSPL…YSPP). Serine 306, serine 368, serine 393, serine 433, and serine 456 each carry phosphoserine. Low complexity-rich tracts occupy residues 335–383 (HSPL…HALP) and 390–411 (PSLSAPALSSSSSSSSTSSPVL). The span at 447 to 468 (SQQQLPKQFSPTMSPTLSSITQ) shows a compositional bias: polar residues. Tyrosine 488 is subject to Phosphotyrosine. Phosphoserine is present on residues serine 489 and serine 492. Phosphothreonine is present on threonine 501. The interval 513–543 (CLVQPSGGQPPGRQPHYGTLYPPGSSGHGQQ) is disordered. Phosphoserine is present on residues serine 611, serine 621, and serine 622.

This sequence belongs to the TORC family. As to quaternary structure, binds, as a tetramer, through its N-terminal region, with the bZIP domain of CREB1. 'Arg-314' in the bZIP domain of CREB1 is essential for this interaction. Interaction, via its C-terminal, with TAF4, enhances recruitment of TAF4 to CREB1. Interacts with SIK2. Interacts with 14-3-3 proteins, YWHAB and YWHAG. Interacts (probably when phosphorylated at Ser-171) with YWHAE. Interacts with calmodulin-dependent catalytic subunit PPP3CA/calcineurin A. Interaction with COP1 mediates nuclear export and degradation of CRTC2. Phosphorylation/dephosphorylation states of Ser-171 are required for regulating transduction of CREB activity. CRTCs/TORCs are inactive when phosphorylated, and active when dephosphorylated at this site. This primary site of phosphorylation, is regulated by cAMP and calcium levels and is dependent on the phosphorylation of SIKs (SIK1 and SIK2) by LKB1. Following adenylyl cyclase activation, dephosphorylated at Ser-171 by PPP3CA/calcineurin A resulting in CRTC2 dissociation from 14-3-3 proteins and PPP3CA. Both insulin and AMPK increase this phosphorylation of CRTC2 while glucagon suppresses it. Phosphorylation at Ser-274 by MARK2 is induced under low glucose conditions and dephosphorylated in response to glucose influx. Phosphorylation at Ser-274 promotes interaction with 14-3-3 proteins and translocation to the cytoplasm. In terms of processing, asymmetric dimethylation of arginine resisues by PRMT6 enhances the association of CRTC2 with CREB on the promoters of gluconeogenic genes.

It localises to the cytoplasm. The protein localises to the nucleus. In terms of biological role, transcriptional coactivator for CREB1 which activates transcription through both consensus and variant cAMP response element (CRE) sites. Acts as a coactivator, in the SIK/TORC signaling pathway, being active when dephosphorylated and acts independently of CREB1 'Ser-133' phosphorylation. Enhances the interaction of CREB1 with TAF4. Regulates gluconeogenesis as a component of the LKB1/AMPK/TORC2 signaling pathway. Regulates the expression of specific genes such as the steroidogenic gene, StAR. Potent coactivator of PPARGC1A and inducer of mitochondrial biogenesis in muscle cells. This is CREB-regulated transcription coactivator 2 (Crtc2) from Rattus norvegicus (Rat).